The chain runs to 284 residues: Trimeric intracellular cation channel type B-B (284 aa).

At 1-15 (MESLSEVSVQFSQLS) the chain is on the lumenal side. The helical transmembrane segment at 16-32 (MFPFFDMAHYLASVMSA) threads the bilayer. Topologically, residues 33-44 (REQAGALDIASH) are cytoplasmic. The helical transmembrane segment at 45–68 (SPMASWFSAMLHCFGGGILSSILL) threads the bilayer. Over 69–79 (AEPPVGILANT) the chain is Lumenal. A helical transmembrane segment spans residues 80–99 (TNIMLASAIWYMVYYFPYDL). Residues 100-102 (FYN) lie on the Cytoplasmic side of the membrane. Residues 103–121 (CFFFLPIRLIAAGMKEVTR) traverse the membrane as a helical segment. Positions 117 and 121 each coordinate a 1,2-diacyl-sn-glycero-3-phospho-(1D-myo-inositol-4,5-bisphosphate). Residues 122–139 (TWKILSGITHAHSHYKDA) are Lumenal-facing. A helical membrane pass occupies residues 140–157 (WLVMITIGWARGAGGGLI). At 158–178 (SNFEQLVRGVWKPESNEFLKM) the chain is on the cytoplasmic side. A helical membrane pass occupies residues 179-196 (SYPVKVTLIGAVLFTLQH). Residues 197–204 (GHYLPISR) are Lumenal-facing. Residues 205 to 225 (HNLMFIYTMFLVSIKVTMMLT) traverse the membrane as a helical segment. Topologically, residues 226 to 284 (HSAGSPFLPLETPLHRILFGLRQNQAEVRESPSSSGAKGKPSKKTLDKDSGEQSNKKDK) are cytoplasmic. Positions 250 to 284 (QAEVRESPSSSGAKGKPSKKTLDKDSGEQSNKKDK) are disordered. Residues 269-284 (KTLDKDSGEQSNKKDK) show a composition bias toward basic and acidic residues.

The protein belongs to the TMEM38 family. As to quaternary structure, homotrimer; conformation seems to be controled by binding to diacylglycerol (DAG).

The protein localises to the endoplasmic reticulum membrane. It catalyses the reaction K(+)(in) = K(+)(out). With respect to regulation, channel activity is activated by increased cytosolic Ca(2+) levels and blocked by luminal high Ca(2+) levels. Its function is as follows. Intracellular monovalent cation channel required for maintenance of rapid intracellular calcium release. Acts as a potassium counter-ion channel that functions in synchronization with calcium release from intracellular stores. Activated by increased cytosolic Ca(2+) levels. This is Trimeric intracellular cation channel type B-B (tmem38b-b) from Xenopus laevis (African clawed frog).